Consider the following 380-residue polypeptide: Methenyltetrahydrofolate synthase domain-containing protein (380 aa).

Residues 245–258 (EEQAGKDVTLRDGP) are compositionally biased toward basic and acidic residues. Disordered regions lie at residues 245-283 (EEQA…PLSS) and 361-380 (LVGS…IAGP). The RRM domain maps to 282-355 (SSVQIGNLPR…NTVRVVLARQ (74 aa)).

This Bos taurus (Bovine) protein is Methenyltetrahydrofolate synthase domain-containing protein (MTHFSD).